The primary structure comprises 433 residues: Urokinase-type plasminogen activator (433 aa).

A signal peptide spans 1–20; it reads MKVWLASLFLCALVVKNSEG. The EGF-like domain occupies 28–64; that stretch reads DESNCGCQNGGVCVSYKYFSRIRRCSCPRKFQGEHCE. Cystine bridges form between C32/C40, C34/C52, C54/C63, C71/C152, C92/C134, and C123/C147. Positions 35-58 are binds urokinase plasminogen activator surface receptor; sequence QNGGVCVSYKYFSRIRRCSCPRKF. In terms of domain architecture, Kringle spans 71–152; it reads CYHGNGDSYR…FVQECMVHDC (82 aa). A connecting peptide region spans residues 153 to 179; that stretch reads SLSKKPSSSVDQQGFQCGQKALRPRFK. At S159 the chain carries Phosphoserine. Intrachain disulfides connect C169-C301, C211-C227, C219-C290, C315-C384, C347-C363, and C374-C402. In terms of domain architecture, Peptidase S1 spans 180–426; the sequence is IVGGEFTEVE…FLDWIQSHIG (247 aa). Catalysis depends on charge relay system residues H226 and D277. S378 (charge relay system) is an active-site residue.

It belongs to the peptidase S1 family. In terms of assembly, found in high and low molecular mass forms. Each consists of two chains, A and B. The high molecular mass form contains a long chain A which is cleaved to yield a short chain A. Forms heterodimer with SERPINA5. Binds LRP1B; binding is followed by internalization and degradation. Interacts with MRC2. Interacts with PLAUR. In complex with SERPINE1, interacts with PLAUR/uPAR. Interacts with SORL1 and LRP1, either alone or in complex with SERPINE1; these interactions are abolished in the presence of LRPAP1/RAP. The ternary complex composed of PLAUR-PLAU-PAI1 also interacts with SORLA. Produced as an inactive single-chain protein (pro-uPA or sc-uPA), is processed into the active disulfide-linked two-chain form of PLAU/uPA by a proteolytic event mediated, at least, by TMPRSS4.

The protein localises to the secreted. The enzyme catalyses Specific cleavage of Arg-|-Val bond in plasminogen to form plasmin.. Its activity is regulated as follows. Inhibited by SERPINA5. Inhibited by SERPINE1. Functionally, specifically cleaves the zymogen plasminogen to form the active enzyme plasmin. The chain is Urokinase-type plasminogen activator (Plau) from Mus musculus (Mouse).